Consider the following 319-residue polypeptide: tRNA-cytidine(32) 2-sulfurtransferase (319 aa).

The short motif at 43 to 48 (SGGKDS) is the PP-loop motif element. Cysteine 118, cysteine 121, and cysteine 209 together coordinate [4Fe-4S] cluster.

Belongs to the TtcA family. Homodimer. Requires Mg(2+) as cofactor. The cofactor is [4Fe-4S] cluster.

The protein localises to the cytoplasm. The enzyme catalyses cytidine(32) in tRNA + S-sulfanyl-L-cysteinyl-[cysteine desulfurase] + AH2 + ATP = 2-thiocytidine(32) in tRNA + L-cysteinyl-[cysteine desulfurase] + A + AMP + diphosphate + H(+). It participates in tRNA modification. Its function is as follows. Catalyzes the ATP-dependent 2-thiolation of cytidine in position 32 of tRNA, to form 2-thiocytidine (s(2)C32). The sulfur atoms are provided by the cysteine/cysteine desulfurase (IscS) system. The chain is tRNA-cytidine(32) 2-sulfurtransferase from Neisseria meningitidis serogroup A / serotype 4A (strain DSM 15465 / Z2491).